Consider the following 412-residue polypeptide: Argininosuccinate synthase (412 aa).

Residues 15–23 (AYSGGLDTS) and alanine 42 contribute to the ATP site. 2 residues coordinate L-citrulline: tyrosine 93 and serine 98. Residue glycine 123 participates in ATP binding. L-aspartate is bound by residues threonine 125, asparagine 129, and aspartate 130. Asparagine 129 is an L-citrulline binding site. L-citrulline is bound by residues arginine 133, serine 185, serine 194, glutamate 270, and tyrosine 282.

Belongs to the argininosuccinate synthase family. Type 1 subfamily. Homotetramer.

The protein resides in the cytoplasm. The catalysed reaction is L-citrulline + L-aspartate + ATP = 2-(N(omega)-L-arginino)succinate + AMP + diphosphate + H(+). Its pathway is amino-acid biosynthesis; L-arginine biosynthesis; L-arginine from L-ornithine and carbamoyl phosphate: step 2/3. This is Argininosuccinate synthase from Psychrobacter arcticus (strain DSM 17307 / VKM B-2377 / 273-4).